A 190-amino-acid chain; its full sequence is Jupiter microtubule associated homolog 2 (190 aa).

Met-1 carries the post-translational modification N-acetylmethionine. Positions 1-15 are enriched in polar residues; the sequence is MFQGADSQAGKSGSR. The disordered stretch occupies residues 1 to 190; sequence MFQGADSQAG…PGGKSSLSFY (190 aa). The residue at position 11 (Lys-11) is an N6-acetyllysine. Ser-30 is modified (phosphoserine). Polar residues predominate over residues 35 to 44; it reads ISSSKPNRMA. Phosphoserine occurs at positions 45, 69, and 97. Composition is skewed to basic and acidic residues over residues 110–129 and 138–153; these read KPKD…DLKA and EQSD…HAKI. A Phosphoserine modification is found at Ser-144.

Belongs to the JUPITER family. As to quaternary structure, monomer. Dimer. Interacts with TPCN1.

Its subcellular location is the cytoplasm. It localises to the nucleus. Its function is as follows. Nicotinic acid adenine dinucleotide phosphate (NAADP) binding protein required for NAADP-evoked intracellular calcium release. Confers NAADP-sensitivity to the two pore channels (TPCs) complex. Enables NAADP to activate Ca(2+) release from the endoplasmic reticulum through ryanodine receptors. The protein is Jupiter microtubule associated homolog 2 of Mus musculus (Mouse).